Reading from the N-terminus, the 303-residue chain is MDALELKNIVSDGLLSFPVTDFDQNGDFNAASYAKRLEWLAPYGASALFAAGGTGEFFSLTGDEYSDVIKTAVDACKGSVPIIAGAGGPTRQAILQAQEAERLGAHGILLMPHYLTEASQEGLVEHVKQVCNAVNFGVIFYNRSVSKLNVDSLQQLVESCPNLIGFKDSSGQIDMMTEVVQTLGDRLSYLGGLPTAEIFAAPYKALGSPVYSSAVFNFIPKTAMEFYNALRNDDFATTQRLIRDFFLPLIKIRNRKSGYAVSMVKAGAKIVGHDAGPVRPPLSDLTPQDYEDLAALIATLGPQ.

It belongs to the DapA family.

It catalyses the reaction 5-dehydro-4-deoxy-D-glucarate + H(+) = 2,5-dioxopentanoate + CO2 + H2O. The protein operates within carbohydrate acid metabolism; D-glucarate degradation; 2,5-dioxopentanoate from D-glucarate: step 2/2. The chain is Probable 5-dehydro-4-deoxyglucarate dehydratase from Acinetobacter baylyi (strain ATCC 33305 / BD413 / ADP1).